The primary structure comprises 353 residues: Photosystem II D2 protein (353 aa).

Residue Thr2 is modified to N-acetylthreonine. Thr2 bears the Phosphothreonine mark. The helical transmembrane segment at 41–61 (CAYFAVGGWFTGTTFVTSWYT) threads the bilayer. His118 is a chlorophyll a binding site. The chain crosses the membrane as a helical span at residues 125–141 (GFMLRQFELARSVQLRP). Pheophytin a contacts are provided by Gln130 and Asn143. Residues 153 to 166 (VFVSVFLIYPLGQS) traverse the membrane as a helical segment. His198 provides a ligand contact to chlorophyll a. A helical membrane pass occupies residues 208 to 228 (AALLCAIHGATVENTLFEDGD). Residues His215 and Phe262 each coordinate a plastoquinone. His215 serves as a coordination point for Fe cation. Fe cation is bound at residue His269. Residues 279-295 (GLWMSALGVVGLALNLR) form a helical membrane-spanning segment.

The protein belongs to the reaction center PufL/M/PsbA/D family. In terms of assembly, PSII is composed of 1 copy each of membrane proteins PsbA, PsbB, PsbC, PsbD, PsbE, PsbF, PsbH, PsbI, PsbJ, PsbK, PsbL, PsbM, PsbT, PsbX, PsbY, PsbZ, Psb30/Ycf12, at least 3 peripheral proteins of the oxygen-evolving complex and a large number of cofactors. It forms dimeric complexes. The D1/D2 heterodimer binds P680, chlorophylls that are the primary electron donor of PSII, and subsequent electron acceptors. It shares a non-heme iron and each subunit binds pheophytin, quinone, additional chlorophylls, carotenoids and lipids. There is also a Cl(-1) ion associated with D1 and D2, which is required for oxygen evolution. The PSII complex binds additional chlorophylls, carotenoids and specific lipids. serves as cofactor.

The protein localises to the plastid. The protein resides in the chloroplast thylakoid membrane. It catalyses the reaction 2 a plastoquinone + 4 hnu + 2 H2O = 2 a plastoquinol + O2. Functionally, photosystem II (PSII) is a light-driven water:plastoquinone oxidoreductase that uses light energy to abstract electrons from H(2)O, generating O(2) and a proton gradient subsequently used for ATP formation. It consists of a core antenna complex that captures photons, and an electron transfer chain that converts photonic excitation into a charge separation. The D1/D2 (PsbA/PsbD) reaction center heterodimer binds P680, the primary electron donor of PSII as well as several subsequent electron acceptors. D2 is needed for assembly of a stable PSII complex. The polypeptide is Photosystem II D2 protein (Guizotia abyssinica (Niger)).